The following is a 62-amino-acid chain: Paralithocin 1 (62 aa).

The first 23 residues, 1-23 (MGPMKVLLVLLVVMVAAPHIADA), serve as a signal peptide directing secretion. 4 disulfides stabilise this stretch: C29-C55, C33-C51, C37-C49, and C42-C52. Tyrosine amide; partial is present on Y61.

Belongs to the paralithocin family. Post-translationally, the amidated form is probably the active form.

Has weak antibacterial activity, mainly against marine Gram-positive bacteria like C.maltaromaticum (MIC=200 uM), C.mobile (MIC=100 uM), C.divergens (MIC=200 uM) and C.funditum (MIC=200 uM) but also against C.glutamicum (MIC=50 uM). Has very little or no activity against Gram-negative bacteria. This is Paralithocin 1 from Paralithodes camtschaticus (Red king crab).